Here is a 282-residue protein sequence, read N- to C-terminus: RsbT co-antagonist protein RsbRC (282 aa).

S165 and S174 each carry phosphoserine. Positions 165–276 (SAPVIVLFHS…STLASAIASD (112 aa)) constitute an STAS domain. T186 is modified (phosphothreonine).

Probably present in the stressosome with RsbRA, RsbRB, RsbRD and RsbS. In terms of processing, phosphorylated by RsbT.

Functionally, one of 4 functionally non-identical RsbR paralogs, it functions in the environmental signaling branch of the general stress response. Negative regulator of sigma-B activity. Non-phosphorylated RsbS binds to RsbT, preventing its association with RsbU. Requires any one of RsbRA, RsbRB, RsbRC or RsbRD to sequester RsbT. When RsbS and the RsbR paralog(s) are phosphorylated, they release RsbT, which can then bind and activate RsbU. In Bacillus subtilis (strain 168), this protein is RsbT co-antagonist protein RsbRC (rsbRC).